Reading from the N-terminus, the 304-residue chain is Protein BOBBER 1 (304 aa).

Alanine 2 carries the post-translational modification N-acetylalanine. A coiled-coil region spans residues 54 to 106 (EDEIVVAVRAAKEKLKKAEKKKAEKESVKPVEKKAEKEIVKLVEKKVEKESVK). The tract at residues 111–141 (ASSAEPIEVEKPKEEEEKKESGPIVPNKGNG) is disordered. Positions 118–131 (EVEKPKEEEEKKES) are enriched in basic and acidic residues. The CS domain maps to 142 to 231 (TDLENYSWIQ…DQMEWWKCCV (90 aa)).

Expressed in all seedling tissues with highest expression levels at the root tip.

It is found in the cytoplasm. The protein resides in the cytoplasmic granule. Its function is as follows. Small heat shock protein required for the establishment of auxin gradients and for patterning of the apical domain of the embryo. Involved in the specification of the cotyledon primordia. Also required for normal inflorescence and floral meristem function, normal developmental patterning and thermotolerance. Acts as a molecular chaperone. The chain is Protein BOBBER 1 (BOB1) from Arabidopsis thaliana (Mouse-ear cress).